Here is a 996-residue protein sequence, read N- to C-terminus: PDZ domain-containing protein C23G3.12c (996 aa).

Positions 1-35 are disordered; sequence MSIKKRARAGSKSDDIGNKTPKKNGIEHEATKSSE. 3 consecutive PDZ domains span residues 280 to 358, 745 to 827, and 860 to 930; these read SRLG…QRGS, EFRA…LREG, and RAVR…STFD. Residues 972 to 996 are disordered; the sequence is KNPSMGFTIDEEVDDNTFDTEGEQQ. The segment covering 980-996 has biased composition (acidic residues); the sequence is IDEEVDDNTFDTEGEQQ.

Belongs to the peptidase S1C family.

The sequence is that of PDZ domain-containing protein C23G3.12c from Schizosaccharomyces pombe (strain 972 / ATCC 24843) (Fission yeast).